The following is a 127-amino-acid chain: Large ribosomal subunit protein bL20 (127 aa).

It belongs to the bacterial ribosomal protein bL20 family.

Binds directly to 23S ribosomal RNA and is necessary for the in vitro assembly process of the 50S ribosomal subunit. It is not involved in the protein synthesizing functions of that subunit. This chain is Large ribosomal subunit protein bL20, found in Bifidobacterium longum (strain NCC 2705).